A 502-amino-acid chain; its full sequence is MFS-type transporeter aprT (502 aa).

The tract at residues 1 to 38 (MASPELASHHSDPSDGEGAPFLPGVDDESPESLNSDIP) is disordered. A run of 11 helical transmembrane segments spans residues 45–65 (HGLI…GPMI), 114–136 (IGYR…GLLA), 150–170 (VGFV…NIFP), 175–195 (WFGA…ALFW), 214–234 (FGIA…FVMK), 239–259 (VPLM…NLLP), 302–322 (VAVI…AFLV), 336–356 (ATLL…FILP), 380–400 (VMLL…NTLI), 403–423 (LLLH…ITGL), and 464–484 (LWIG…ALVL). Asparagine 495 carries N-linked (GlcNAc...) asparagine glycosylation.

It belongs to the major facilitator superfamily.

It is found in the cell membrane. Functionally, MFS-rype transporer; part of the gene cluster that mediates the biosynthesis of the asperipin-2a, a bicyclic peptide that possesses two macrocyclic ether rings consisting of 14- and 17-membered paracyclophans. AprT is likely to be involved in the cellular export of asperipin-2a. The protein is MFS-type transporeter aprT of Aspergillus flavus (strain ATCC 200026 / FGSC A1120 / IAM 13836 / NRRL 3357 / JCM 12722 / SRRC 167).